The chain runs to 331 residues: L-lactate dehydrogenase A chain (331 aa).

Residues 29–57 (GMVG…MEDK) and Arg98 each bind NAD(+). Positions 105, 137, and 168 each coordinate substrate. Asn137 is a binding site for NAD(+). Catalysis depends on His192, which acts as the Proton acceptor. Thr247 lines the substrate pocket.

This sequence belongs to the LDH/MDH superfamily. LDH family. Homotetramer.

The protein resides in the cytoplasm. The catalysed reaction is (S)-lactate + NAD(+) = pyruvate + NADH + H(+). It participates in fermentation; pyruvate fermentation to lactate; (S)-lactate from pyruvate: step 1/1. Interconverts simultaneously and stereospecifically pyruvate and lactate with concomitant interconversion of NADH and NAD(+). The polypeptide is L-lactate dehydrogenase A chain (ldha) (Dissostichus mawsoni (Antarctic cod)).